Reading from the N-terminus, the 310-residue chain is Cytochrome f (310 aa).

A signal peptide spans 1–27; it reads MRRILTFFLGSIIIGLSIIISPSSSFA. Heme is bound by residues tyrosine 28, cysteine 48, cysteine 51, and histidine 52. Residues 277-297 form a helical membrane-spanning segment; that stretch reads VIGLIAFFAGVALTQILLVLK.

The protein belongs to the cytochrome f family. In terms of assembly, the 4 large subunits of the cytochrome b6-f complex are cytochrome b6, subunit IV (17 kDa polypeptide, PetD), cytochrome f and the Rieske protein, while the 4 small subunits are PetG, PetL, PetM and PetN. The complex functions as a dimer. The cofactor is heme.

The protein localises to the cellular thylakoid membrane. In terms of biological role, component of the cytochrome b6-f complex, which mediates electron transfer between photosystem II (PSII) and photosystem I (PSI), cyclic electron flow around PSI, and state transitions. In Prochlorococcus marinus (strain SARG / CCMP1375 / SS120), this protein is Cytochrome f.